Consider the following 410-residue polypeptide: TNF receptor-associated factor family protein DDB_G0279745 (410 aa).

Residues Cys-27–Arg-67 form an RING-type; degenerate zinc finger. TRAF-type zinc fingers lie at residues Tyr-81 to Gln-154 and Gln-154 to Ile-213. Positions Leu-216 to Ala-284 form a coiled coil.

The protein belongs to the TNF receptor-associated factor family.

It is found in the cytoplasm. Functionally, probable adapter protein and signal transducer that links members of the tumor necrosis factor receptor family to different signaling pathways by association with the receptor cytoplasmic domain and kinases. This chain is TNF receptor-associated factor family protein DDB_G0279745, found in Dictyostelium discoideum (Social amoeba).